Consider the following 275-residue polypeptide: Trans-aconitate 2-methyltransferase (275 aa).

This sequence belongs to the methyltransferase superfamily. Tam family.

The protein localises to the cytoplasm. It carries out the reaction trans-aconitate + S-adenosyl-L-methionine = (E)-3-(methoxycarbonyl)pent-2-enedioate + S-adenosyl-L-homocysteine. Functionally, catalyzes the S-adenosylmethionine monomethyl esterification of trans-aconitate. The protein is Trans-aconitate 2-methyltransferase of Pseudomonas aeruginosa (strain UCBPP-PA14).